Here is a 319-residue protein sequence, read N- to C-terminus: MSSQLEALRRHTTVVADTGDFEAMRALRPTDATTNPSLILKAVQKEAYRPLLQQVVRDHRGAPLAELTDRLLVAFGREILNIVPGRVSTEVDARLSFDTRATVERGRGLIALYEAAGIPRERVLIKTASTWEGIQAARLLQADGIRCNLTLLFSLPQAVACADAGVQLISPFVGRIYDWYKKAAGADWVEAERAGANDPGVQSVTEIYRYYKRHGITTEIMGASFRNKGQILALAGCDLLTISPELLAELDGAQGDVPVRLTRDDEAGEVPARRPADEVWFRTELNANAMATEKLAEGIRLFSADAIKLDALLGGAAGR.

The Schiff-base intermediate with substrate role is filled by K126.

The protein belongs to the transaldolase family. Type 1 subfamily. In terms of assembly, homodimer.

The protein resides in the cytoplasm. It catalyses the reaction D-sedoheptulose 7-phosphate + D-glyceraldehyde 3-phosphate = D-erythrose 4-phosphate + beta-D-fructose 6-phosphate. It functions in the pathway carbohydrate degradation; pentose phosphate pathway; D-glyceraldehyde 3-phosphate and beta-D-fructose 6-phosphate from D-ribose 5-phosphate and D-xylulose 5-phosphate (non-oxidative stage): step 2/3. Functionally, transaldolase is important for the balance of metabolites in the pentose-phosphate pathway. This chain is Transaldolase, found in Bordetella petrii (strain ATCC BAA-461 / DSM 12804 / CCUG 43448).